Here is a 283-residue protein sequence, read N- to C-terminus: Lactoylglutathione lyase GLX1 (283 aa).

A2 carries the post-translational modification N-acetylalanine. VOC domains follow at residues R17 to R141 and P147 to N275. H20 contacts Zn(2+). A substrate-binding site is contributed by R24. Position 71 (E71) interacts with Zn(2+). The substrate site is built by N75 and H89. Residues H89, E137, and Q150 each contribute to the Zn(2+) site. Catalysis depends on E137, which acts as the Proton donor/acceptor. Substrate-binding residues include Q150 and R154. Q150 is an a divalent metal cation binding site. E201 lines the Zn(2+) pocket. E201 serves as a coordination point for a divalent metal cation. N205 serves as a coordination point for substrate. Position 219 (Q219) interacts with a divalent metal cation. Substrate is bound at residue P251–L252. V271 is a binding site for a divalent metal cation.

The protein belongs to the glyoxalase I family. In terms of assembly, homodimer. The cofactor is Zn(2+). Phosphorylated by SnRK2.8.

The enzyme catalyses (R)-S-lactoylglutathione = methylglyoxal + glutathione. It functions in the pathway secondary metabolite metabolism; methylglyoxal degradation; (R)-lactate from methylglyoxal: step 1/2. Its function is as follows. Catalyzes the conversion of hemimercaptal, formed from methylglyoxal and glutathione, to S-lactoylglutathione. The sequence is that of Lactoylglutathione lyase GLX1 from Arabidopsis thaliana (Mouse-ear cress).